The sequence spans 541 residues: Membrane protein insertase YidC (541 aa).

The next 5 helical transmembrane spans lie at 6-26 (NILL…WQAD), 349-369 (FVGN…GLLF), 420-440 (GGCL…WVLL), 457-477 (LSVQ…MFVM), and 500-520 (MIFT…WLVG).

Belongs to the OXA1/ALB3/YidC family. Type 1 subfamily. In terms of assembly, interacts with the Sec translocase complex via SecD. Specifically interacts with transmembrane segments of nascent integral membrane proteins during membrane integration.

It localises to the cell inner membrane. Its function is as follows. Required for the insertion and/or proper folding and/or complex formation of integral membrane proteins into the membrane. Involved in integration of membrane proteins that insert both dependently and independently of the Sec translocase complex, as well as at least some lipoproteins. Aids folding of multispanning membrane proteins. The polypeptide is Membrane protein insertase YidC (Shewanella sp. (strain ANA-3)).